Here is a 64-residue protein sequence, read N- to C-terminus: U2-aranetoxin-Av1a (64 aa).

As to expression, expressed in fat body, but not in cephalothorax, silk gland, midgut.

Insecticidal toxin. This is U2-aranetoxin-Av1a from Araneus ventricosus (Orbweaver spider).